The primary structure comprises 200 residues: THO complex subunit tho5 (200 aa).

This sequence belongs to the THOC5 family. Component of the THO and TREX complexes.

The protein resides in the cytoplasm. Its subcellular location is the nucleus. Functionally, component the THO subcomplex of the TREX complex, which operates in coupling transcription elongation to mRNA export. The THO complex is recruited to transcribed genes and moves along the gene with the elongating polymerase during transcription. THO is important for stabilizing nascent RNA in the RNA polymerase II elongation complex by preventing formation of DNA:RNA hybrids behind the elongating polymerase. The THO complex is also required to maintain TRAMP complex occupancy at sites of snoRNA transcription thus promoting exosome-mediated degradation of snoRNA precursors. The sequence is that of THO complex subunit tho5 from Schizosaccharomyces pombe (strain 972 / ATCC 24843) (Fission yeast).